The sequence spans 612 residues: Rhotekin-2 (612 aa).

One can recognise an REM-1 domain in the interval 3–79; sequence IKRKKIRESA…LRSQMGESNT (77 aa). The 108-residue stretch at 285–392 folds into the PH domain; that stretch reads DEAMMGFLNQ…WMEAFWQHFY (108 aa). Disordered regions lie at residues 483–530 and 574–612; these read RNKP…SDKE and ENKA…QSQV. The segment covering 486–498 has biased composition (low complexity); sequence PPLLSSDDPSTSS.

This chain is Rhotekin-2 (rtkn2), found in Xenopus laevis (African clawed frog).